Reading from the N-terminus, the 418-residue chain is UDP-N-acetylglucosamine 1-carboxyvinyltransferase (418 aa).

22 to 23 is a phosphoenolpyruvate binding site; the sequence is KN. Arg92 provides a ligand contact to UDP-N-acetyl-alpha-D-glucosamine. Cys116 functions as the Proton donor in the catalytic mechanism. Position 116 is a 2-(S-cysteinyl)pyruvic acid O-phosphothioketal (Cys116). Residues Asp306 and Ile328 each contribute to the UDP-N-acetyl-alpha-D-glucosamine site.

It belongs to the EPSP synthase family. MurA subfamily.

The protein resides in the cytoplasm. The enzyme catalyses phosphoenolpyruvate + UDP-N-acetyl-alpha-D-glucosamine = UDP-N-acetyl-3-O-(1-carboxyvinyl)-alpha-D-glucosamine + phosphate. It functions in the pathway cell wall biogenesis; peptidoglycan biosynthesis. Cell wall formation. Adds enolpyruvyl to UDP-N-acetylglucosamine. In Shewanella amazonensis (strain ATCC BAA-1098 / SB2B), this protein is UDP-N-acetylglucosamine 1-carboxyvinyltransferase.